A 369-amino-acid polypeptide reads, in one-letter code: UDP-N-acetylglucosamine--N-acetylmuramyl-(pentapeptide) pyrophosphoryl-undecaprenol N-acetylglucosamine transferase (369 aa).

Residues 16-18, Asn130, Arg171, Ser196, and Gln297 each bind UDP-N-acetyl-alpha-D-glucosamine; that span reads TGG.

The protein belongs to the glycosyltransferase 28 family. MurG subfamily.

The protein resides in the cell inner membrane. The catalysed reaction is di-trans,octa-cis-undecaprenyl diphospho-N-acetyl-alpha-D-muramoyl-L-alanyl-D-glutamyl-meso-2,6-diaminopimeloyl-D-alanyl-D-alanine + UDP-N-acetyl-alpha-D-glucosamine = di-trans,octa-cis-undecaprenyl diphospho-[N-acetyl-alpha-D-glucosaminyl-(1-&gt;4)]-N-acetyl-alpha-D-muramoyl-L-alanyl-D-glutamyl-meso-2,6-diaminopimeloyl-D-alanyl-D-alanine + UDP + H(+). The protein operates within cell wall biogenesis; peptidoglycan biosynthesis. In terms of biological role, cell wall formation. Catalyzes the transfer of a GlcNAc subunit on undecaprenyl-pyrophosphoryl-MurNAc-pentapeptide (lipid intermediate I) to form undecaprenyl-pyrophosphoryl-MurNAc-(pentapeptide)GlcNAc (lipid intermediate II). The sequence is that of UDP-N-acetylglucosamine--N-acetylmuramyl-(pentapeptide) pyrophosphoryl-undecaprenol N-acetylglucosamine transferase from Desulfotalea psychrophila (strain LSv54 / DSM 12343).